The chain runs to 197 residues: Putative NADH dehydrogenase/NAD(P)H nitroreductase Plav_3612 (197 aa).

It belongs to the nitroreductase family. HadB/RutE subfamily. FMN serves as cofactor.

The polypeptide is Putative NADH dehydrogenase/NAD(P)H nitroreductase Plav_3612 (Parvibaculum lavamentivorans (strain DS-1 / DSM 13023 / NCIMB 13966)).